Reading from the N-terminus, the 318-residue chain is Acetyl-coenzyme A carboxylase carboxyl transferase subunit alpha (318 aa).

Residues 36-293 (EIDRLKEKST…KTRLSEQLDQ (258 aa)) form the CoA carboxyltransferase C-terminal domain.

The protein belongs to the AccA family. As to quaternary structure, acetyl-CoA carboxylase is a heterohexamer composed of biotin carboxyl carrier protein (AccB), biotin carboxylase (AccC) and two subunits each of ACCase subunit alpha (AccA) and ACCase subunit beta (AccD).

It is found in the cytoplasm. It catalyses the reaction N(6)-carboxybiotinyl-L-lysyl-[protein] + acetyl-CoA = N(6)-biotinyl-L-lysyl-[protein] + malonyl-CoA. It participates in lipid metabolism; malonyl-CoA biosynthesis; malonyl-CoA from acetyl-CoA: step 1/1. Functionally, component of the acetyl coenzyme A carboxylase (ACC) complex. First, biotin carboxylase catalyzes the carboxylation of biotin on its carrier protein (BCCP) and then the CO(2) group is transferred by the carboxyltransferase to acetyl-CoA to form malonyl-CoA. The chain is Acetyl-coenzyme A carboxylase carboxyl transferase subunit alpha from Teredinibacter turnerae (strain ATCC 39867 / T7901).